Consider the following 442-residue polypeptide: D-serine dehydratase (442 aa).

Lys118 is modified (N6-(pyridoxal phosphate)lysine).

Belongs to the serine/threonine dehydratase family. DsdA subfamily. In terms of assembly, monomer. Requires pyridoxal 5'-phosphate as cofactor.

It carries out the reaction D-serine = pyruvate + NH4(+). The sequence is that of D-serine dehydratase from Citrobacter koseri (strain ATCC BAA-895 / CDC 4225-83 / SGSC4696).